An 85-amino-acid chain; its full sequence is MVKLRLKRCGRKQQAVYRIVAIDVRSRREGRDLRKVGFYDPIKNQTCLNVPAILYFLEKGAQPTRTVYDILRKAELFKEKERILS.

Belongs to the bacterial ribosomal protein bS16 family.

The protein localises to the plastid. Its subcellular location is the chloroplast. This Agrostis stolonifera (Creeping bentgrass) protein is Small ribosomal subunit protein bS16c.